The following is a 479-amino-acid chain: MDYHDPYFFGYVLGFIHLLGTGAAIHALLTVRTSQGAIAWAMPLLFIPYFTLLPYLVFGRSSFDAYIKARRQANQEMRIAIGDLNWRPWMEEAVAARRSEAYAALRAMPKLGNMPALANNKVKLLINGEETFGAIFQAIREAKKTILVQFFIIHDDKLGRELQSLLLEKAAEGVAIFVLYDRIGSHALPGAYIDKLRDGGVQIKAFATRGGWLNRFQINFRNHRKIVVVDGLKGYIGGHNVGDEYMGLKPPLAPWRDTHVQVIGPVVACLQESFAEDWFWATRELPPLSLPDEFPEDGVLCQLLTSGPADAQETCSLFFVEAIHAAEERVWITSPYFIPDEAVTAALTLAVLRGVDVRLLLPSRPDHYVVYAASSLYAFDAVRAGVRVFRYEPGFLHQKVVLVDNEITAIGSANLDNRSFRLNFELMLLTVDSDFSSQVESMLTADFNLAREISVQESHETRRLHQLGMRVARLISPIL.

Helical transmembrane passes span 8 to 28 (FFGY…IHAL) and 38 to 58 (IAWA…YLVF). PLD phosphodiesterase domains are found at residues 218-245 (INFR…GDEY) and 392-419 (EPGF…DNRS). Catalysis depends on residues His223, Lys225, Asp230, His397, Lys399, and Asp404.

This sequence belongs to the phospholipase D family. Cardiolipin synthase subfamily. ClsA sub-subfamily.

Its subcellular location is the cell inner membrane. It carries out the reaction 2 a 1,2-diacyl-sn-glycero-3-phospho-(1'-sn-glycerol) = a cardiolipin + glycerol. Catalyzes the reversible phosphatidyl group transfer from one phosphatidylglycerol molecule to another to form cardiolipin (CL) (diphosphatidylglycerol) and glycerol. This chain is Cardiolipin synthase A, found in Pseudomonas syringae pv. syringae (strain B728a).